We begin with the raw amino-acid sequence, 164 residues long: Siroheme decarboxylase alpha subunit (164 aa).

It belongs to the Ahb/Nir family. In terms of assembly, forms a heterodimer composed of AhbA and AhbB.

The catalysed reaction is siroheme + 2 H(+) = 12,18-didecarboxysiroheme + 2 CO2. Its pathway is porphyrin-containing compound metabolism; protoheme biosynthesis. In terms of biological role, involved in siroheme-dependent heme b biosynthesis. Catalyzes the decarboxylation of siroheme into didecarboxysiroheme. This Oleidesulfovibrio alaskensis (strain ATCC BAA-1058 / DSM 17464 / G20) (Desulfovibrio alaskensis) protein is Siroheme decarboxylase alpha subunit.